The primary structure comprises 1097 residues: DNA-directed RNA polymerase subunit beta (1097 aa).

Positions 1073–1097 (DVNPRRSTPSRPTYESLGVADYDED) are disordered.

Belongs to the RNA polymerase beta chain family. As to quaternary structure, in cyanobacteria the RNAP catalytic core is composed of 2 alpha, 1 beta, 1 beta', 1 gamma and 1 omega subunit. When a sigma factor is associated with the core the holoenzyme is formed, which can initiate transcription.

It catalyses the reaction RNA(n) + a ribonucleoside 5'-triphosphate = RNA(n+1) + diphosphate. Functionally, DNA-dependent RNA polymerase catalyzes the transcription of DNA into RNA using the four ribonucleoside triphosphates as substrates. The sequence is that of DNA-directed RNA polymerase subunit beta from Synechococcus sp. (strain CC9311).